Here is a 271-residue protein sequence, read N- to C-terminus: UPF0328 protein ECU09_0020 (271 aa).

The protein belongs to the UPF0328 family.

The polypeptide is UPF0328 protein ECU09_0020 (Encephalitozoon cuniculi (strain GB-M1) (Microsporidian parasite)).